The following is a 290-amino-acid chain: Polyamine aminopropyltransferase (290 aa).

The 234-residue stretch at 5-238 folds into the PABS domain; the sequence is QLWYEKLHSS…GIMTFAWASE (234 aa). Residue glutamine 33 coordinates S-methyl-5'-thioadenosine. Spermidine-binding residues include histidine 64 and aspartate 88. Residues glutamate 108 and 140-141 contribute to the S-methyl-5'-thioadenosine site; that span reads DG. The Proton acceptor role is filled by aspartate 158. Residue 158-161 participates in spermidine binding; sequence DSTD. Proline 165 is an S-methyl-5'-thioadenosine binding site.

Belongs to the spermidine/spermine synthase family. Homodimer or homotetramer.

It is found in the cytoplasm. The catalysed reaction is S-adenosyl 3-(methylsulfanyl)propylamine + putrescine = S-methyl-5'-thioadenosine + spermidine + H(+). It functions in the pathway amine and polyamine biosynthesis; spermidine biosynthesis; spermidine from putrescine: step 1/1. Functionally, catalyzes the irreversible transfer of a propylamine group from the amino donor S-adenosylmethioninamine (decarboxy-AdoMet) to putrescine (1,4-diaminobutane) to yield spermidine. This is Polyamine aminopropyltransferase from Hamiltonella defensa subsp. Acyrthosiphon pisum (strain 5AT).